We begin with the raw amino-acid sequence, 275 residues long: Methyltransferase str2 (275 aa).

This sequence belongs to the methyltransferase superfamily. LaeA methyltransferase family.

Its pathway is mycotoxin biosynthesis. In terms of biological role, methyltransferase; part of the gene cluster that mediates the biosynthesis of strobilurin A, an antifungal polyketide that contains a key beta-methoxyacrylate toxophore that targets the complex III of the mitochondrial electron transport chain. Strobilurin biosynthesis begins with construction of benzoyl CoA by step-wise elimination of ammonia from phenylalanine by the phenylalanine ammonia-lyase str11, oxygenation by str8 and retro-Claisen reaction to form benzoic acid, which is activated to its CoA thiolester benzoyl CoA by the dedicated CoA ligase str10. Benzoyl CoA forms the starter unit for the highly reducing polyketide synthase stpks1 that produces the polyketide prestrobilutin A. The FAD-dependent oxygenase str9 then catalyzes the key oxidative rearrangement responsible for the creation of the beta-methoxyacrylate toxophore. Str9 performs epoxidation of the 2,3 olefin of prestrobilutin A, followed by Meinwald rearrangement to furnish the aldehyde intermediate. Rapid enolization of the aldehyde intermediate would give the beta-methoxyacrylate skeleton and methylations catalyzed by str2 and str3 complete the synthesis and lead to the production of strobilurin A. The short-chain dehydrogenase stl2 and the dehydrogenase str4 play a role in the shunt pathway leading to the production of bolineol. The cluster encodes no obvious halogenase gene that could be involved in production of strobilurin B, nor any obvious dimethylallyl-transferase that could be involved in the production of strobilurin G. It is possible that unknown proteins encoded in, or near, the cluster (such as str1 or stl1) may form new classes of halogenases or dimethylally-transferases, or that the responsible genes are located elsewhere on the genome. Similarly, proteins encoded by str5/str6 hydrolases appear to have no chemical role in the biosynthesis of strobilurin A. Finally, no obvious self-resistance gene is found within the cluster. This chain is Methyltransferase str2, found in Strobilurus tenacellus.